Consider the following 311-residue polypeptide: Aspartate carbamoyltransferase catalytic subunit (311 aa).

Positions 55 and 56 each coordinate carbamoyl phosphate. An L-aspartate-binding site is contributed by Lys85. Carbamoyl phosphate is bound by residues Arg106, His135, and Gln138. Positions 168 and 230 each coordinate L-aspartate. Carbamoyl phosphate-binding residues include Leu268 and Pro269.

This sequence belongs to the aspartate/ornithine carbamoyltransferase superfamily. ATCase family. In terms of assembly, heterododecamer (2C3:3R2) of six catalytic PyrB chains organized as two trimers (C3), and six regulatory PyrI chains organized as three dimers (R2).

It carries out the reaction carbamoyl phosphate + L-aspartate = N-carbamoyl-L-aspartate + phosphate + H(+). It functions in the pathway pyrimidine metabolism; UMP biosynthesis via de novo pathway; (S)-dihydroorotate from bicarbonate: step 2/3. Catalyzes the condensation of carbamoyl phosphate and aspartate to form carbamoyl aspartate and inorganic phosphate, the committed step in the de novo pyrimidine nucleotide biosynthesis pathway. The sequence is that of Aspartate carbamoyltransferase catalytic subunit from Klebsiella pneumoniae (strain 342).